A 67-amino-acid chain; its full sequence is Beta-defensin 103A (67 aa).

A signal peptide spans 1-22; it reads MRIHYLLFTLLFLFLVPVPGHG. Disulfide bonds link C33/C62, C40/C55, and C45/C63.

Belongs to the beta-defensin family.

The protein localises to the secreted. Functionally, exhibits antimicrobial activity against Gram-positive and Gram-negative bacteria. The protein is Beta-defensin 103A (DEFB103A) of Gorilla gorilla gorilla (Western lowland gorilla).